A 491-amino-acid chain; its full sequence is E3 ubiquitin-protein ligase Hakai (491 aa).

The tract at residues 1–61 (MDHTDNELQG…PAKAPPGDEE (61 aa)) is disordered. The RING-type zinc-finger motif lies at 109–149 (CDKCGLPIKIYGRMIPCKHVFCYDCAILHEKKGDKMCPGCS). The HYB domain stretch occupies residues 148–206 (CSDPVQRIEQCTRGSLFMCSIVQGCKRTYLSQRDLQAHINHRHMRAGKPVTRASLENVH). Residues 164–190 (FMCSIVQGCKRTYLSQRDLQAHINHRH) form a C2H2-type zinc finger. Residues Ser-201, Ser-285, and Ser-290 each carry the phosphoserine modification. The disordered stretch occupies residues 255-491 (QPHEDIRAPP…DQTRYRPYYQ (237 aa)). Pro residues-rich tracts occupy residues 342–359 (APPPPPPPPISHPMPHPP), 372–389 (APPPPMTSAPPPITPPPG), and 399–423 (MNHPPPGPPPPQHGGPPVTAPPPHH). The span at 427–442 (NSLPQFTEDQGTLSPP) shows a compositional bias: polar residues. Over residues 457 to 478 (PRGPPPPPRLQGPPSQTPLPGP) the composition is skewed to pro residues.

It belongs to the Hakai family. As to quaternary structure, homodimer. Interacts with tyrosine-phosphorylated SRC substrates. Component of the WMM complex, a N6-methyltransferase complex composed of a catalytic subcomplex, named MAC, and of an associated subcomplex, named MACOM. The MAC subcomplex is composed of METTL3 and METTL14. The MACOM subcomplex is composed of WTAP, ZC3H13, CBLL1/HAKAI, VIRMA, and, in some cases of RBM15 (RBM15 or RBM15B). Also a component of a MACOM-like complex, named WTAP complex, composed of WTAP, ZC3H13, CBLL1, VIRMA, RBM15, BCLAF1 and THRAP3. In terms of processing, phosphorylated on tyrosine residues.

It localises to the nucleus speckle. It is found in the nucleus. The protein localises to the nucleoplasm. The protein resides in the cytoplasm. The enzyme catalyses S-ubiquitinyl-[E2 ubiquitin-conjugating enzyme]-L-cysteine + [acceptor protein]-L-lysine = [E2 ubiquitin-conjugating enzyme]-L-cysteine + N(6)-ubiquitinyl-[acceptor protein]-L-lysine.. It participates in protein modification; protein ubiquitination. E3 ubiquitin-protein ligase that mediates ubiquitination of several tyrosine-phosphorylated Src substrates, including CDH1, CTTN and DOK1. Targets CDH1 for endocytosis and degradation. Associated component of the WMM complex, a complex that mediates N6-methyladenosine (m6A) methylation of RNAs, a modification that plays a role in the efficiency of mRNA splicing and RNA processing. Its function in the WMM complex is unknown. The chain is E3 ubiquitin-protein ligase Hakai from Homo sapiens (Human).